Here is a 354-residue protein sequence, read N- to C-terminus: uncharacterized protein (354 aa).

Positions V309–G326 are enriched in polar residues. The tract at residues V309–E333 is disordered. Residues G326–N353 adopt a coiled-coil conformation.

It is found in the virion. This is an uncharacterized protein from Acanthamoeba polyphaga (Amoeba).